The following is a 60-amino-acid chain: Large ribosomal subunit protein bL32 (60 aa).

Belongs to the bacterial ribosomal protein bL32 family.

The protein is Large ribosomal subunit protein bL32 of Clostridium novyi (strain NT).